Consider the following 301-residue polypeptide: UDP-N-acetylenolpyruvoylglucosamine reductase (301 aa).

The 168-residue stretch at 27–194 folds into the FAD-binding PCMH-type domain; sequence RVGGPADVVF…LDAIFEGTPD (168 aa). Arg172 is a catalytic residue. The active-site Proton donor is the Ser223. The active site involves Glu293.

This sequence belongs to the MurB family. FAD serves as cofactor.

Its subcellular location is the cytoplasm. It catalyses the reaction UDP-N-acetyl-alpha-D-muramate + NADP(+) = UDP-N-acetyl-3-O-(1-carboxyvinyl)-alpha-D-glucosamine + NADPH + H(+). Its pathway is cell wall biogenesis; peptidoglycan biosynthesis. Functionally, cell wall formation. This is UDP-N-acetylenolpyruvoylglucosamine reductase from Caulobacter vibrioides (strain NA1000 / CB15N) (Caulobacter crescentus).